The chain runs to 505 residues: Probable malate:quinone oxidoreductase (505 aa).

The protein belongs to the MQO family. Requires FAD as cofactor.

The catalysed reaction is (S)-malate + a quinone = a quinol + oxaloacetate. The protein operates within carbohydrate metabolism; tricarboxylic acid cycle; oxaloacetate from (S)-malate (quinone route): step 1/1. This is Probable malate:quinone oxidoreductase from Pseudomonas fluorescens.